We begin with the raw amino-acid sequence, 350 residues long: Biotin synthase (350 aa).

The Radical SAM core domain maps to 38 to 256; that stretch reads NYVQVSTLLS…IAVARIMMPT (219 aa). Positions 53, 57, and 60 each coordinate [4Fe-4S] cluster. C97, C128, C188, and R260 together coordinate [2Fe-2S] cluster.

The protein belongs to the radical SAM superfamily. Biotin synthase family. In terms of assembly, homodimer. It depends on [4Fe-4S] cluster as a cofactor. The cofactor is [2Fe-2S] cluster.

It catalyses the reaction (4R,5S)-dethiobiotin + (sulfur carrier)-SH + 2 reduced [2Fe-2S]-[ferredoxin] + 2 S-adenosyl-L-methionine = (sulfur carrier)-H + biotin + 2 5'-deoxyadenosine + 2 L-methionine + 2 oxidized [2Fe-2S]-[ferredoxin]. Its pathway is cofactor biosynthesis; biotin biosynthesis; biotin from 7,8-diaminononanoate: step 2/2. Functionally, catalyzes the conversion of dethiobiotin (DTB) to biotin by the insertion of a sulfur atom into dethiobiotin via a radical-based mechanism. This chain is Biotin synthase, found in Vibrio vulnificus (strain CMCP6).